The sequence spans 149 residues: Protein SprT-like (149 aa).

Residues 5–143 enclose the SprT-like domain; it reads DYVKQVSLED…CGLCRGKLLL (139 aa). Histidine 64 is a binding site for Zn(2+). Residue glutamate 65 is part of the active site. Histidine 68 is a binding site for Zn(2+).

It belongs to the SprT family. It depends on Zn(2+) as a cofactor.

It is found in the cytoplasm. The sequence is that of Protein SprT-like from Streptococcus pneumoniae (strain Hungary19A-6).